We begin with the raw amino-acid sequence, 197 residues long: Small ribosomal subunit protein uS4A (197 aa).

The 75-residue stretch at Arg-107–Ala-181 folds into the S4 RNA-binding domain. The segment at Pro-160–Glu-197 is disordered. Lys-180 is covalently cross-linked (Glycyl lysine isopeptide (Lys-Gly) (interchain with G-Cter in ubiquitin)). Residue Ser-184 is modified to Phosphoserine. The span at Ala-187–Glu-197 shows a compositional bias: acidic residues.

It belongs to the universal ribosomal protein uS4 family. In terms of assembly, component of the small ribosomal subunit (SSU). Mature yeast ribosomes consist of a small (40S) and a large (60S) subunit. The 40S small subunit contains 1 molecule of ribosomal RNA (18S rRNA) and 33 different proteins (encoded by 57 genes). The large 60S subunit contains 3 rRNA molecules (25S, 5.8S and 5S rRNA) and 46 different proteins (encoded by 81 genes). Interacts with snoRNA U3. uS11 interacts with MPP10. Component of the ribosomal small subunit (SSU) processome composed of at least 40 protein subunits and snoRNA U3.

The protein localises to the cytoplasm. It is found in the nucleus. Its subcellular location is the nucleolus. Component of the ribosome, a large ribonucleoprotein complex responsible for the synthesis of proteins in the cell. The small ribosomal subunit (SSU) binds messenger RNAs (mRNAs) and translates the encoded message by selecting cognate aminoacyl-transfer RNA (tRNA) molecules. The large subunit (LSU) contains the ribosomal catalytic site termed the peptidyl transferase center (PTC), which catalyzes the formation of peptide bonds, thereby polymerizing the amino acids delivered by tRNAs into a polypeptide chain. The nascent polypeptides leave the ribosome through a tunnel in the LSU and interact with protein factors that function in enzymatic processing, targeting, and the membrane insertion of nascent chains at the exit of the ribosomal tunnel. uS4 is involved in nucleolar processing of pre-18S ribosomal RNA and ribosome assembly. The sequence is that of Small ribosomal subunit protein uS4A from Saccharomyces cerevisiae (strain ATCC 204508 / S288c) (Baker's yeast).